Consider the following 619-residue polypeptide: DNA mismatch repair protein MutL (619 aa).

Belongs to the DNA mismatch repair MutL/HexB family.

Its function is as follows. This protein is involved in the repair of mismatches in DNA. It is required for dam-dependent methyl-directed DNA mismatch repair. May act as a 'molecular matchmaker', a protein that promotes the formation of a stable complex between two or more DNA-binding proteins in an ATP-dependent manner without itself being part of a final effector complex. The protein is DNA mismatch repair protein MutL of Xylella fastidiosa (strain M23).